The primary structure comprises 389 residues: Large envelope protein (389 aa).

The residue at position 1 (M1) is an N-acetylmethionine. G2 carries the N-myristoyl glycine; by host lipid modification. Positions 2–108 (GTNLSVPNPL…PPLRDSHPQA (107 aa)) are pre-S1. The segment at 2 to 163 (GTNLSVPNPL…FSRTGDPAPN (162 aa)) is pre-S. The Virion surface; in external conformation portion of the chain corresponds to 2 to 170 (GTNLSVPNPL…APNMESTTSG (169 aa)). The Intravirion; in internal conformation segment spans residues 2-242 (GTNLSVPNPL…PGYRWMCLRR (241 aa)). The interval 74–105 (LTTVPAAPPPASTNRQSGRQPTPISPPLRDSH) is disordered. The segment covering 85-95 (STNRQSGRQPT) has biased composition (polar residues). The pre-S2 stretch occupies residues 109 to 163 (MQWNSTTFHQALLDPRVRGLYFPAGGSSSGTVNPVPTIVSPISSIFSRTGDPAPN). Residues 171 to 191 (FLGPLLVLQAGFFLLTRILTI) form a helical membrane-spanning segment. Over 192–242 (PQSLDSWWTSLNFLGEAPTCPGQNSQSPTSNHSPTSCPPICPGYRWMCLRR) the chain is Intravirion; in external conformation. Residues 243-263 (FIIFLFILLLCLIFLLVLLDY) form a helical membrane-spanning segment. The Virion surface portion of the chain corresponds to 264–337 (QGMLPVCPLL…WASVRFSWLS (74 aa)). N309 carries N-linked (GlcNAc...) asparagine; by host glycosylation. The chain crosses the membrane as a helical span at residues 338–358 (LLVPFVQWFAGLSPTVWLSVI). Residues 359 to 364 (WMMWYW) lie on the Intravirion side of the membrane. The chain crosses the membrane as a helical span at residues 365–387 (GPSLYNILSPFLPLLPIFFCLWV). The Virion surface portion of the chain corresponds to 388–389 (YI).

This sequence belongs to the orthohepadnavirus major surface antigen family. In terms of assembly, in its internal form (Li-HBsAg), interacts with the capsid protein and with the isoform S. Interacts with host chaperone CANX. Associates with host chaperone CANX through its pre-S2 N glycan; this association may be essential for isoform M proper secretion. As to quaternary structure, interacts with isoform L. Interacts with the antigens of satellite virus HDV (HDVAgs); this interaction is required for encapsidation of HDV genomic RNA. Post-translationally, isoform M is N-terminally acetylated by host at a ratio of 90%, and N-glycosylated by host at the pre-S2 region. In terms of processing, myristoylated.

It is found in the virion membrane. The large envelope protein exists in two topological conformations, one which is termed 'external' or Le-HBsAg and the other 'internal' or Li-HBsAg. In its external conformation the protein attaches the virus to cell receptors and thereby initiating infection. This interaction determines the species specificity and liver tropism. This attachment induces virion internalization predominantly through caveolin-mediated endocytosis. The large envelope protein also assures fusion between virion membrane and endosomal membrane. In its internal conformation the protein plays a role in virion morphogenesis and mediates the contact with the nucleocapsid like a matrix protein. Its function is as follows. The middle envelope protein plays an important role in the budding of the virion. It is involved in the induction of budding in a nucleocapsid independent way. In this process the majority of envelope proteins bud to form subviral lipoprotein particles of 22 nm of diameter that do not contain a nucleocapsid. The protein is Large envelope protein of Hepatitis B virus genotype C subtype adr (isolate Japan/A4/1994) (HBV-C).